We begin with the raw amino-acid sequence, 206 residues long: RNA-free ribonuclease P (206 aa).

The segment at 187–206 (NLAGDDPGHAPPCGPDQPAG) is disordered. Residues 195 to 206 (HAPPCGPDQPAG) are compositionally biased toward pro residues.

Belongs to the HARP family.

It carries out the reaction Endonucleolytic cleavage of RNA, removing 5'-extranucleotides from tRNA precursor.. RNA-free RNase P that catalyzes the removal of the 5'-leader sequence from pre-tRNA to produce the mature 5'-terminus. This chain is RNA-free ribonuclease P, found in Halorhodospira halophila (strain DSM 244 / SL1) (Ectothiorhodospira halophila (strain DSM 244 / SL1)).